The chain runs to 693 residues: Phosphoribosylformylglycinamidine synthase subunit PurL (693 aa).

The active site involves His-34. ATP is bound by residues Tyr-37 and Lys-76. Glu-78 contributes to the Mg(2+) binding site. Residues 79 to 82 (SHNH) and Arg-101 contribute to the substrate site. The active-site Proton acceptor is the His-80. Asp-102 serves as a coordination point for Mg(2+). Gln-222 is a substrate binding site. Residue Asp-248 participates in Mg(2+) binding. 292–294 (ETQ) contacts substrate. ATP-binding residues include Asp-470 and Gly-507. Residue Ser-510 coordinates substrate.

The protein belongs to the FGAMS family. As to quaternary structure, monomer. Part of the FGAM synthase complex composed of 1 PurL, 1 PurQ and 2 PurS subunits.

Its subcellular location is the cytoplasm. The catalysed reaction is N(2)-formyl-N(1)-(5-phospho-beta-D-ribosyl)glycinamide + L-glutamine + ATP + H2O = 2-formamido-N(1)-(5-O-phospho-beta-D-ribosyl)acetamidine + L-glutamate + ADP + phosphate + H(+). It functions in the pathway purine metabolism; IMP biosynthesis via de novo pathway; 5-amino-1-(5-phospho-D-ribosyl)imidazole from N(2)-formyl-N(1)-(5-phospho-D-ribosyl)glycinamide: step 1/2. Part of the phosphoribosylformylglycinamidine synthase complex involved in the purines biosynthetic pathway. Catalyzes the ATP-dependent conversion of formylglycinamide ribonucleotide (FGAR) and glutamine to yield formylglycinamidine ribonucleotide (FGAM) and glutamate. The FGAM synthase complex is composed of three subunits. PurQ produces an ammonia molecule by converting glutamine to glutamate. PurL transfers the ammonia molecule to FGAR to form FGAM in an ATP-dependent manner. PurS interacts with PurQ and PurL and is thought to assist in the transfer of the ammonia molecule from PurQ to PurL. The sequence is that of Phosphoribosylformylglycinamidine synthase subunit PurL from Pyrobaculum calidifontis (strain DSM 21063 / JCM 11548 / VA1).